The following is a 599-amino-acid chain: Sulfite reductase [NADPH] flavoprotein alpha-component (599 aa).

In terms of domain architecture, Flavodoxin-like spans 64 to 202; that stretch reads ITIISASQTG…AASEWRARVV (139 aa). Residues 70–75, 117–120, and 153–162 contribute to the FMN site; these read SQTGNA, STQG, and LGDSSYEFFC. The 215-residue stretch at 234–448 folds into the FAD-binding FR-type domain; the sequence is DAPLAASLSV…IEHNDNFRLP (215 aa). FAD contacts are provided by residues T322, A356, 386 to 389, 404 to 406, Y410, and 419 to 422; these read RLYS, TVG, and GGAS. NADP(+) contacts are provided by residues 519-520, 525-529, and D561; these read SR and KIYVQ. Y599 contributes to the FAD binding site.

This sequence belongs to the NADPH-dependent sulphite reductase flavoprotein subunit CysJ family. In the N-terminal section; belongs to the flavodoxin family. It in the C-terminal section; belongs to the flavoprotein pyridine nucleotide cytochrome reductase family. Alpha(8)-beta(8). The alpha component is a flavoprotein, the beta component is a hemoprotein. The cofactor is FAD. FMN serves as cofactor.

It catalyses the reaction hydrogen sulfide + 3 NADP(+) + 3 H2O = sulfite + 3 NADPH + 4 H(+). The protein operates within sulfur metabolism; hydrogen sulfide biosynthesis; hydrogen sulfide from sulfite (NADPH route): step 1/1. Component of the sulfite reductase complex that catalyzes the 6-electron reduction of sulfite to sulfide. This is one of several activities required for the biosynthesis of L-cysteine from sulfate. The flavoprotein component catalyzes the electron flow from NADPH -&gt; FAD -&gt; FMN to the hemoprotein component. This Escherichia coli O6:K15:H31 (strain 536 / UPEC) protein is Sulfite reductase [NADPH] flavoprotein alpha-component.